A 605-amino-acid chain; its full sequence is Insulin-like growth factor-binding protein complex acid labile subunit (605 aa).

Residues 1 to 27 form the signal peptide; that stretch reads MALRKGGLALALLLLSWVALGPRSLEG. Residues 32–74 form the LRRNT domain; the sequence is TPGEAEGPACPATCACSYDDEVNELSVFCSSRNLTRLPDGIPG. 2 cysteine pairs are disulfide-bonded: Cys-41–Cys-47 and Cys-45–Cys-60. 3 N-linked (GlcNAc...) asparagine glycosylation sites follow: Asn-64, Asn-85, and Asn-96. 19 LRR repeats span residues 75-96, 99-120, 123-144, 147-168, 171-192, 195-216, 219-240, 243-264, 267-288, 291-312, 315-336, 339-360, 363-384, 387-408, 411-432, 435-456, 459-480, 483-504, and 507-528; these read GTQA…AFRN, SLAF…ALLG, NLCH…TFAY, ALAL…LFEG, NLWD…AFRG, GLRE…LFSG, ELRE…VFAQ, RLQK…AFLG, ALRW…TFPG, GLRV…TFED, FLEE…SFEG, QLEV…AFLG, NVAV…VFRG, KLHS…TFAG, GLRR…SLWG, ELLE…LFQG, KLEY…ALGP, RAFW…LLAS, and RLRY…PPGL. A glycan (N-linked (GlcNAc...) asparagine) is linked at Asn-368. N-linked (GlcNAc...) asparagine glycosylation occurs at Asn-515. Positions 536 to 605 constitute an LRRCT domain; sequence NPWDCSCPLK…DLGEAHFAPC (70 aa). Intrachain disulfides connect Cys-540-Cys-583, Cys-542-Cys-605, and Cys-566-Cys-571. A glycan (N-linked (GlcNAc...) asparagine) is linked at Asn-580.

In terms of assembly, forms a ternary complex with IGF1 and IGFBP3.

The protein resides in the secreted. It localises to the extracellular space. Its function is as follows. Involved in protein-protein interactions that result in protein complexes, receptor-ligand binding or cell adhesion. The sequence is that of Insulin-like growth factor-binding protein complex acid labile subunit (IGFALS) from Papio hamadryas (Hamadryas baboon).